The chain runs to 156 residues: Regulatory protein RecX (156 aa).

The protein belongs to the RecX family.

It is found in the cytoplasm. Functionally, modulates RecA activity. The sequence is that of Regulatory protein RecX from Pseudomonas putida (strain ATCC 47054 / DSM 6125 / CFBP 8728 / NCIMB 11950 / KT2440).